The primary structure comprises 313 residues: Ribosomal RNA small subunit methyltransferase H (313 aa).

Residues 35–37, D53, F80, D101, and Q108 each bind S-adenosyl-L-methionine; that span reads GGY.

The protein belongs to the methyltransferase superfamily. RsmH family.

Its subcellular location is the cytoplasm. It carries out the reaction cytidine(1402) in 16S rRNA + S-adenosyl-L-methionine = N(4)-methylcytidine(1402) in 16S rRNA + S-adenosyl-L-homocysteine + H(+). Functionally, specifically methylates the N4 position of cytidine in position 1402 (C1402) of 16S rRNA. The protein is Ribosomal RNA small subunit methyltransferase H of Acidiphilium cryptum (strain JF-5).